The chain runs to 196 residues: MKWCGVLMVALLQSLCCSGLPLYQSELASTADKALVVTMTQVNNLYAGLRLYRVSRGSIKRVVPLGLNTYDLIMNFGIKETDCLKSSGEDPQRCAFRVGFFVPAASCTARVRVTAEFTQVVSLNCGQDSSSSESSSEENFTRKRQQLNVQPFGNRGPVLPVPGFSEATRFPSHSFSRQEVEPQPIPRGDSFGNHLE.

The N-terminal stretch at M1–G19 is a signal peptide. 2 cysteine pairs are disulfide-bonded: C83-C94 and C107-C125. Positions C125–E196 are disordered. Residues S129–E138 show a composition bias toward low complexity.

This sequence belongs to the SPP2 family. In terms of processing, multiply phosphorylated at serine residues.

It is found in the secreted. Functionally, could coordinate an aspect of bone turnover. The chain is Secreted phosphoprotein 24 (spp2) from Salmo salar (Atlantic salmon).